A 279-amino-acid chain; its full sequence is Large ribosomal subunit protein uL2 (279 aa).

Disordered regions lie at residues 1–28 (MPAR…TKEK) and 221–279 (RGTV…GRRR). The span at 12-22 (GRRNSSVLTRD) shows a compositional bias: polar residues.

This sequence belongs to the universal ribosomal protein uL2 family. In terms of assembly, part of the 50S ribosomal subunit. Forms a bridge to the 30S subunit in the 70S ribosome.

One of the primary rRNA binding proteins. Required for association of the 30S and 50S subunits to form the 70S ribosome, for tRNA binding and peptide bond formation. It has been suggested to have peptidyltransferase activity; this is somewhat controversial. Makes several contacts with the 16S rRNA in the 70S ribosome. The polypeptide is Large ribosomal subunit protein uL2 (Rubrobacter xylanophilus (strain DSM 9941 / JCM 11954 / NBRC 16129 / PRD-1)).